A 455-amino-acid chain; its full sequence is tRNA modification GTPase MnmE (455 aa).

(6S)-5-formyl-5,6,7,8-tetrahydrofolate contacts are provided by Arg-24, Glu-86, and Arg-125. The TrmE-type G domain occupies Gly-220–Gln-376. Residue Asn-230 participates in K(+) binding. GTP-binding positions include Asn-230–Ser-235, Thr-249–Thr-255, and Asp-274–Gly-277. Ser-234 serves as a coordination point for Mg(2+). 3 residues coordinate K(+): Thr-249, Leu-251, and Thr-254. Residue Thr-255 participates in Mg(2+) binding. Lys-455 contributes to the (6S)-5-formyl-5,6,7,8-tetrahydrofolate binding site.

This sequence belongs to the TRAFAC class TrmE-Era-EngA-EngB-Septin-like GTPase superfamily. TrmE GTPase family. In terms of assembly, homodimer. Heterotetramer of two MnmE and two MnmG subunits. K(+) serves as cofactor.

Its subcellular location is the cytoplasm. Exhibits a very high intrinsic GTPase hydrolysis rate. Involved in the addition of a carboxymethylaminomethyl (cmnm) group at the wobble position (U34) of certain tRNAs, forming tRNA-cmnm(5)s(2)U34. In Acaryochloris marina (strain MBIC 11017), this protein is tRNA modification GTPase MnmE.